A 150-amino-acid chain; its full sequence is MSLTIDVKILDNRLHHMLPSYATPGSAGLDLRACTEHTQTLAPGETIMIPTGMAIHLADPHYAALILPRSGLGHKHGIVLGNLVGLIDSDYQGQLLVSCWNRGKESFILNPLERIAQLVIVPVMQANFNIVDDFQASERGTGGFGSTGRQ.

Substrate-binding positions include 69–71 (RSG), Asn82, and 86–88 (LID).

This sequence belongs to the dUTPase family. It depends on Mg(2+) as a cofactor.

The enzyme catalyses dUTP + H2O = dUMP + diphosphate + H(+). Its pathway is pyrimidine metabolism; dUMP biosynthesis; dUMP from dCTP (dUTP route): step 2/2. Functionally, this enzyme is involved in nucleotide metabolism: it produces dUMP, the immediate precursor of thymidine nucleotides and it decreases the intracellular concentration of dUTP so that uracil cannot be incorporated into DNA. This is Deoxyuridine 5'-triphosphate nucleotidohydrolase from Methylobacillus flagellatus (strain ATCC 51484 / DSM 6875 / VKM B-1610 / KT).